The following is a 152-amino-acid chain: Putative pre-16S rRNA nuclease (152 aa).

This sequence belongs to the YqgF nuclease family.

It is found in the cytoplasm. Could be a nuclease involved in processing of the 5'-end of pre-16S rRNA. The sequence is that of Putative pre-16S rRNA nuclease from Bifidobacterium longum (strain DJO10A).